We begin with the raw amino-acid sequence, 450 residues long: Tubulin alpha-1 chain (450 aa).

The GTP site is built by Q11, E71, G144, T145, T179, N206, and N228. E71 provides a ligand contact to Mg(2+). The active site involves E254.

This sequence belongs to the tubulin family. Dimer of alpha and beta chains. A typical microtubule is a hollow water-filled tube with an outer diameter of 25 nm and an inner diameter of 15 nM. Alpha-beta heterodimers associate head-to-tail to form protofilaments running lengthwise along the microtubule wall with the beta-tubulin subunit facing the microtubule plus end conferring a structural polarity. Microtubules usually have 13 protofilaments but different protofilament numbers can be found in some organisms and specialized cells. It depends on Mg(2+) as a cofactor. In terms of processing, undergoes a tyrosination/detyrosination cycle, the cyclic removal and re-addition of a C-terminal tyrosine residue by the enzymes tubulin tyrosine carboxypeptidase (TTCP) and tubulin tyrosine ligase (TTL), respectively.

Its subcellular location is the cytoplasm. The protein localises to the cytoskeleton. It carries out the reaction GTP + H2O = GDP + phosphate + H(+). In terms of biological role, tubulin is the major constituent of microtubules, a cylinder consisting of laterally associated linear protofilaments composed of alpha- and beta-tubulin heterodimers. Microtubules grow by the addition of GTP-tubulin dimers to the microtubule end, where a stabilizing cap forms. Below the cap, tubulin dimers are in GDP-bound state, owing to GTPase activity of alpha-tubulin. This is Tubulin alpha-1 chain (TUBA1) from Hordeum vulgare (Barley).